We begin with the raw amino-acid sequence, 399 residues long: Probable inactive 2-oxoglutarate-dependent dioxygenase AOP2 (399 aa).

The Fe2OG dioxygenase domain occupies 248 to 345; it reads GGDDVEANDD…RYTAAIFTCP (98 aa). Fe cation is bound by residues histidine 268, aspartate 270, and histidine 325. Arginine 336 contributes to the 2-oxoglutarate binding site.

This sequence belongs to the iron/ascorbate-dependent oxidoreductase family. Fe(2+) serves as cofactor.

The polypeptide is Probable inactive 2-oxoglutarate-dependent dioxygenase AOP2 (AOP2) (Arabidopsis thaliana (Mouse-ear cress)).